Here is a 373-residue protein sequence, read N- to C-terminus: Chaperone protein DnaJ (373 aa).

Positions 4-69 constitute a J domain; the sequence is NYYEILEISQ…EKRSIYDRYG (66 aa). The CR-type zinc-finger motif lies at 133-210; that stretch reads GCKKKIDFSY…CHGNGYEEIK (78 aa). Zn(2+) is bound by residues Cys-146, Cys-149, Cys-162, Cys-165, Cys-184, Cys-187, Cys-198, and Cys-201. CXXCXGXG motif repeat units lie at residues 146–153, 162–169, 184–191, and 198–205; these read CKSCKGSG, CPHCGGKG, CDHCKGSG, and CKTCHGNG.

The protein belongs to the DnaJ family. Homodimer. Zn(2+) serves as cofactor.

It is found in the cytoplasm. Its function is as follows. Participates actively in the response to hyperosmotic and heat shock by preventing the aggregation of stress-denatured proteins and by disaggregating proteins, also in an autonomous, DnaK-independent fashion. Unfolded proteins bind initially to DnaJ; upon interaction with the DnaJ-bound protein, DnaK hydrolyzes its bound ATP, resulting in the formation of a stable complex. GrpE releases ADP from DnaK; ATP binding to DnaK triggers the release of the substrate protein, thus completing the reaction cycle. Several rounds of ATP-dependent interactions between DnaJ, DnaK and GrpE are required for fully efficient folding. Also involved, together with DnaK and GrpE, in the DNA replication of plasmids through activation of initiation proteins. The polypeptide is Chaperone protein DnaJ (Campylobacter lari (strain RM2100 / D67 / ATCC BAA-1060)).